The following is a 321-amino-acid chain: Autophagy protein 5 (321 aa).

Lysine 157 participates in a covalent cross-link: Glycyl lysine isopeptide (Lys-Gly) (interchain with G-Cter in atg12).

Belongs to the ATG5 family. In terms of assembly, conjugated with atg12. Conjugated to atg12; which is essential for autophagy.

Its subcellular location is the preautophagosomal structure membrane. In terms of biological role, involved in cytoplasm to vacuole transport (Cvt) and autophagic vesicle formation. Autophagy is essential for maintenance of amino acid levels and protein synthesis under nitrogen starvation. Required for selective autophagic degradation of the nucleus (nucleophagy). Also required for mitophagy, which eliminates defective or superfluous mitochondria in order to fulfill cellular energy requirements and prevent excess ROS production. Conjugation with atg12, through a ubiquitin-like conjugating system involving atg7 as an E1-like activating enzyme and atg10 as an E2-like conjugating enzyme, is essential for its function. The atg12-atg5 conjugate acts as an E3-like enzyme which is required for lipidation of atg8 and atg8 association to the vesicle membranes. This chain is Autophagy protein 5 (atg5), found in Aspergillus clavatus (strain ATCC 1007 / CBS 513.65 / DSM 816 / NCTC 3887 / NRRL 1 / QM 1276 / 107).